Reading from the N-terminus, the 139-residue chain is Large ribosomal subunit protein uL24 (139 aa).

Residues 1–25 form a disordered region; that stretch reads MKRNTNVSSSRRKSRKAHFTASSGE.

It belongs to the universal ribosomal protein uL24 family.

The chain is Large ribosomal subunit protein uL24 (rpl26) from Dictyostelium discoideum (Social amoeba).